A 578-amino-acid polypeptide reads, in one-letter code: Probable acyl-activating enzyme 12, peroxisomal (578 aa).

The Microbody targeting signal motif lies at S576–L578.

It belongs to the ATP-dependent AMP-binding enzyme family. Expressed at low levels in leaves.

Its subcellular location is the peroxisome. In terms of biological role, may act as an acid--thiol ligase that activates carboxylic acids by forming acyl-CoAs. This is Probable acyl-activating enzyme 12, peroxisomal (AAE12) from Arabidopsis thaliana (Mouse-ear cress).